Consider the following 1026-residue polypeptide: Contactin-4 (1026 aa).

A signal peptide spans 1-18 (MRLPWELLVLQSFILCLA). 6 consecutive Ig-like C2-type domains span residues 32-117 (PSPV…AKLQ), 122-207 (DNFK…KVLG), 225-311 (PKIE…GQLT), 316-400 (PNWI…AELS), 406-493 (PDFS…GNLV), and 497-586 (PTRV…DRLS). 6 disulfides stabilise this stretch: cysteine 50-cysteine 100, cysteine 144-cysteine 194, cysteine 247-cysteine 295, cysteine 337-cysteine 384, cysteine 429-cysteine 477, and cysteine 519-cysteine 576. Residues asparagine 65, asparagine 90, and asparagine 191 are each glycosylated (N-linked (GlcNAc...) asparagine). N-linked (GlcNAc...) asparagine glycans are attached at residues asparagine 370, asparagine 375, and asparagine 466. Fibronectin type-III domains are found at residues 599–697 (PPEA…TEEA), 702–799 (TPAN…SAEE), 804–899 (PPAS…TRKP), and 900–995 (PPSQ…ISNA). Residues 685–710 (PSRPSEKRRTEEALPEVTPANVSGGG) are disordered. Residues 687 to 696 (RPSEKRRTEE) show a composition bias toward basic and acidic residues. N-linked (GlcNAc...) asparagine glycosylation is found at asparagine 705, asparagine 764, asparagine 858, asparagine 893, asparagine 911, asparagine 929, and asparagine 954. A compositionally biased stretch (polar residues) spans 886 to 896 (GPSSATVNVTT). Residues 886-907 (GPSSATVNVTTRKPPPSQPPGN) form a disordered region. Serine 1000 carries the GPI-anchor amidated serine lipid modification. Residues 1001-1026 (GASTSNACTLSAISTIMISLTARSSL) constitute a propeptide, removed in mature form.

It belongs to the immunoglobulin superfamily. Contactin family. Interacts with PTPRG. Mainly expressed in brain. Highly expressed in cerebellum and weakly expressed in corpus callosum, caudate nucleus, amygdala and spinal cord. Also expressed in testis, pancreas, thyroid, uterus, small intestine and kidney. Not expressed in skeletal muscle. Isoform 2 is weakly expressed in cerebral cortex.

Its subcellular location is the cell membrane. The protein localises to the secreted. In terms of biological role, contactins mediate cell surface interactions during nervous system development. Has some neurite outgrowth-promoting activity. May be involved in synaptogenesis. This Homo sapiens (Human) protein is Contactin-4 (CNTN4).